A 60-amino-acid chain; its full sequence is Large ribosomal subunit protein bL32 (60 aa).

The segment covering 1-16 (MAVPKKKTSKSRKNMR) has biased composition (basic residues). The tract at residues 1-20 (MAVPKKKTSKSRKNMRRAHD) is disordered.

It belongs to the bacterial ribosomal protein bL32 family.

The chain is Large ribosomal subunit protein bL32 from Geobacter metallireducens (strain ATCC 53774 / DSM 7210 / GS-15).